A 58-amino-acid polypeptide reads, in one-letter code: MAVPKKKTSNAKRDQRKAHWKRTAALEAQKALSLGKSVLSGRSNSFVYPQDEEEDDEE.

Disordered regions lie at residues 1-22 and 39-58; these read MAVP…HWKR and LSGR…DDEE.

The protein belongs to the bacterial ribosomal protein bL32 family.

The chain is Large ribosomal subunit protein bL32 from Crocosphaera subtropica (strain ATCC 51142 / BH68) (Cyanothece sp. (strain ATCC 51142)).